A 180-amino-acid chain; its full sequence is Adenine phosphoribosyltransferase (180 aa).

It belongs to the purine/pyrimidine phosphoribosyltransferase family. Homodimer.

It localises to the cytoplasm. It carries out the reaction AMP + diphosphate = 5-phospho-alpha-D-ribose 1-diphosphate + adenine. Its pathway is purine metabolism; AMP biosynthesis via salvage pathway; AMP from adenine: step 1/1. Its function is as follows. Catalyzes a salvage reaction resulting in the formation of AMP, that is energically less costly than de novo synthesis. The sequence is that of Adenine phosphoribosyltransferase from Rhizobium meliloti (strain 1021) (Ensifer meliloti).